Reading from the N-terminus, the 23-residue chain is NADP phosphatase 2 (23 aa).

In terms of assembly, homodimer.

Its subcellular location is the cytoplasm. The chain is NADP phosphatase 2 from Arthrobacter sp. (strain KM).